The primary structure comprises 681 residues: Minichromosome maintenance domain-containing protein 2 (681 aa).

Ser-292 carries the post-translational modification Phosphoserine. The region spanning 533-621 is the MCM domain; it reads RQFTTEDFEK…LIAALLFETS (89 aa).

Plays an important role in meiotic recombination and associated DNA double-strand break repair. The protein is Minichromosome maintenance domain-containing protein 2 (MCMDC2) of Homo sapiens (Human).